Here is a 179-residue protein sequence, read N- to C-terminus: Cytoglobin-2 (179 aa).

Positions 1–11 (MEKEREDEETE) are enriched in acidic residues. The interval 1–20 (MEKEREDEETEGRERPEPLT) is disordered. The region spanning 18–167 (PLTDVERGII…LYWHITGAYT (150 aa)) is the Globin domain. Residues histidine 81 and histidine 113 each coordinate heme b.

This sequence belongs to the globin family. In terms of assembly, monomeric. In terms of tissue distribution, expressed in all tissues examined, with highest levels in brain and eye, and considerably lower levels in skin, gut, heart, gill, liver and muscle.

It is found in the cytoplasm. It localises to the nucleus. The catalysed reaction is Fe(II)-heme b-[protein] + nitric oxide + O2 = Fe(III)-heme b-[protein] + nitrate. The enzyme catalyses Fe(III)-heme b-[protein] + nitric oxide + H2O = Fe(II)-heme b-[protein] + nitrite + 2 H(+). It carries out the reaction 2 superoxide + 2 H(+) = H2O2 + O2. It catalyses the reaction H2O2 + AH2 = A + 2 H2O. Probable multifunctional globin with a hexacoordinated heme iron required for the catalysis of various reactions depending on redox condition of the cell as well as oxygen availability. Has a nitric oxide dioxygenase (NOD) activity and is most probably involved in cell-mediated and oxygen-dependent nitric oxide consumption. Under normoxic conditions functions as a nitric oxide dioxygenase (NOD) but under hypoxic conditions the globin may switch its function to that of a nitrite (NO2) reductase (NiR), generating nitric oxide. Could also have peroxidase and superoxide dismutase activities, detoxifying reactive oxygen species and protecting cells against oxidative stress. Also binds dioxygen with low affinity and could function as an oxygen sensor but has probably no function as a respiratory oxygen carrier. The protein is Cytoglobin-2 of Danio rerio (Zebrafish).